The primary structure comprises 110 residues: Insulin-2 (110 aa).

The signal sequence occupies residues methionine 1–alanine 24. Intrachain disulfides connect cysteine 31/cysteine 96, cysteine 43/cysteine 109, and cysteine 95/cysteine 100. Residues glutamate 57 to glutamine 87 constitute a propeptide, c peptide.

Belongs to the insulin family. As to quaternary structure, heterodimer of a B chain and an A chain linked by two disulfide bonds.

It localises to the secreted. Insulin decreases blood glucose concentration. It increases cell permeability to monosaccharides, amino acids and fatty acids. It accelerates glycolysis, the pentose phosphate cycle, and glycogen synthesis in liver. The sequence is that of Insulin-2 (Ins2) from Rattus norvegicus (Rat).